Here is a 346-residue protein sequence, read N- to C-terminus: Heterogeneous nuclear ribonucleoprotein A2 homolog 1 (346 aa).

RRM domains are found at residues 9–92 and 100–179; these read RKLF…ESAK and KKLF…LSKQ. Disordered regions lie at residues 182 to 217 and 326 to 346; these read QDVQ…FRGG and NYGP…RNRY. Residues 193-217 are compositionally biased toward gly residues; it reads GNFGFGDSRGGGNFGSGPGGNFRGG. The interval 297-340 is nuclear targeting sequence; it reads QQSSNYGPMKSGGNFGGNRSMGGGPYGGGNYGPGNASGGNGGGY.

Its subcellular location is the nucleus. Functionally, forms complexes (ribonucleosomes) with at least 20 other different hnRNP and heterogeneous nuclear RNA in the nucleus. This is Heterogeneous nuclear ribonucleoprotein A2 homolog 1 from Xenopus laevis (African clawed frog).